The chain runs to 267 residues: Hydrolase FUB4 (267 aa).

Catalysis depends on charge relay system residues serine 93, aspartate 183, and histidine 243.

The protein belongs to the AB hydrolase 3 family.

Its pathway is mycotoxin biosynthesis. Functionally, hydrolase; part of the gene cluster that mediates the biosynthesis of fusaric acid, a mycotoxin with low to moderate toxicity to animals and humans, but with high phytotoxic properties. L-aspartate is suggested as fusaric acid amino acid precursor that is activated and further processed to O-acetyl-L-homoserine by cluster enzymes aspartate kinase FUB3 and homoserine O-acetyltransferase FUB5, as well as enzymes of the primary metabolism. The polyketide synthase (PKS) FUB1 generates the triketide trans-2-hexenal which is presumptively released by the hydrolase FUB4 and linked to the NRPS-bound amino acid precursor by NAD(P)-dependent dehydrogenase FUB6. FUB1, FUB4, and the non-canonical NRPS Fub8 may form an enzyme complex. Further processing of the NRPS-bound intermediate might be carried out by FUB6 and the sulfhydrylase FUB7, enabling a spontaneous electrocyclization to close the carbon backbone of fusaric acid. Dihydrofusaric acid is likely to be released via reduction by the thioester reductase (TR) domain of FUB8 whereupon the final oxidation to fusaric acid may (also) be performed by the FMN-dependent dehydrogenase FUB9. In Fusarium oxysporum f. sp. lycopersici (strain 4287 / CBS 123668 / FGSC 9935 / NRRL 34936) (Fusarium vascular wilt of tomato), this protein is Hydrolase FUB4.